Here is a 1792-residue protein sequence, read N- to C-terminus: BTB/POZ domain-containing protein 8 (1792 aa).

2 consecutive BTB domains span residues Thr-58–Asn-127 and Pro-206–Asp-273. Disordered stretches follow at residues Asp-528–Gly-554, Ser-581–Val-658, Thr-670–Arg-692, Lys-707–Pro-768, Ser-788–Val-815, Ala-831–Lys-989, Glu-1151–Arg-1283, and Ser-1519–Asp-1607. Composition is skewed to polar residues over residues Phe-541 to Asp-552 and Gly-588 to Thr-601. Composition is skewed to basic and acidic residues over residues Leu-602–Thr-625 and Ser-640–Leu-650. Polar residues predominate over residues Gly-724–Thr-740. Positions Asp-744–Ser-758 are enriched in basic and acidic residues. Residues Thr-838–Glu-865 are compositionally biased toward polar residues. Residues Ser-866–Arg-877 show a composition bias toward low complexity. Basic and acidic residues-rich tracts occupy residues Gln-878 to Thr-891 and Lys-927 to Gln-939. Polar residues predominate over residues Ile-947–Arg-956. Positions Met-969–Pro-987 are enriched in basic and acidic residues. Polar residues-rich tracts occupy residues Glu-1151 to Ala-1160 and Ser-1195 to Met-1215. Residues Ser-1250 to Ser-1259 are compositionally biased toward low complexity. Basic and acidic residues predominate over residues Ile-1566–Asn-1594. The span at Ile-1597–Asp-1607 shows a compositional bias: polar residues.

As to quaternary structure, interacts (via N-terminus) with adapter protein complex AP-2 subunits alpha (AP2A1) and beta (AP2B1). As to expression, highly expressed in fetal brain. Weakly expressed in adult brain and prostate.

It is found in the cell projection. Its subcellular location is the axon. It localises to the presynapse. The protein resides in the cytoplasmic vesicle. The protein localises to the clathrin-coated vesicle. It is found in the nucleus. Its function is as follows. Involved in clathrin-mediated endocytosis at the synapse. Plays a role in neuronal development and in synaptic vesicle recycling in mature neurons, a process required for normal synaptic transmission. The sequence is that of BTB/POZ domain-containing protein 8 from Homo sapiens (Human).